The sequence spans 121 residues: Small ribosomal subunit protein uS13 (121 aa).

The segment at 91–121 (HRKGLPVRGQRTRTNARTRKGKKKTVAGKKK) is disordered.

This sequence belongs to the universal ribosomal protein uS13 family. In terms of assembly, part of the 30S ribosomal subunit. Forms a loose heterodimer with protein S19. Forms two bridges to the 50S subunit in the 70S ribosome.

Its function is as follows. Located at the top of the head of the 30S subunit, it contacts several helices of the 16S rRNA. In the 70S ribosome it contacts the 23S rRNA (bridge B1a) and protein L5 of the 50S subunit (bridge B1b), connecting the 2 subunits; these bridges are implicated in subunit movement. Contacts the tRNAs in the A and P-sites. The polypeptide is Small ribosomal subunit protein uS13 (Treponema denticola (strain ATCC 35405 / DSM 14222 / CIP 103919 / JCM 8153 / KCTC 15104)).